Consider the following 326-residue polypeptide: GTPase Obg (326 aa).

Positions Met-1 to Met-159 constitute an Obg domain. The interval Glu-119–Pro-138 is disordered. In terms of domain architecture, OBG-type G spans Ala-160–Lys-323. Residues Gly-166–Ser-173, Phe-191–Val-195, Asp-213–Gly-216, Thr-280–Asp-283, and Ser-304–Val-306 contribute to the GTP site. Positions 173 and 193 each coordinate Mg(2+).

The protein belongs to the TRAFAC class OBG-HflX-like GTPase superfamily. OBG GTPase family. As to quaternary structure, monomer. Mg(2+) serves as cofactor.

It localises to the cytoplasm. Its function is as follows. An essential GTPase which binds GTP, GDP and possibly (p)ppGpp with moderate affinity, with high nucleotide exchange rates and a fairly low GTP hydrolysis rate. Plays a role in control of the cell cycle, stress response, ribosome biogenesis and in those bacteria that undergo differentiation, in morphogenesis control. The protein is GTPase Obg of Chlorobium phaeobacteroides (strain BS1).